The sequence spans 177 residues: Parathyroid hormone-related protein (177 aa).

Residues M1–G24 form the signal peptide. Residues R25 to L34 constitute a propeptide that is removed on maturation. Residues R57 to H68 are important for receptor binding. A disordered region spans residues A74–T149. Positions S76–N90 are enriched in polar residues. A Nuclear localization signal motif is present at residues T108–K129. Positions N109–P118 are enriched in basic and acidic residues. The span at P122–K132 shows a compositional bias: basic residues.

It belongs to the parathyroid hormone family. In terms of assembly, PTHrP interacts with PTH1R (via N-terminal extracellular domain). There are several secretory forms, including osteostatin, arising from endoproteolytic cleavage of the initial translation product. Each of these secretory forms is believed to have one or more of its own receptors that mediates the normal paracrine, autocrine and endocrine actions.

It is found in the secreted. It localises to the cytoplasm. The protein resides in the nucleus. Its function is as follows. Neuroendocrine peptide which is a critical regulator of cellular and organ growth, development, migration, differentiation and survival and of epithelial calcium ion transport. Acts by binding to its receptor, PTH1R, activating G protein-coupled receptor signaling. Regulates endochondral bone development and epithelial-mesenchymal interactions during the formation of the mammary glands and teeth. Required for skeletal homeostasis. Promotes mammary mesenchyme differentiation and bud outgrowth by modulating mesenchymal cell responsiveness to BMPs. Up-regulates BMPR1A expression in the mammary mesenchyme and this increases the sensitivity of these cells to BMPs and allows them to respond to BMP4 in a paracrine and/or autocrine fashion. BMP4 signaling in the mesenchyme, in turn, triggers epithelial outgrowth and augments MSX2 expression, which causes the mammary mesenchyme to inhibit hair follicle formation within the nipple sheath. Potent inhibitor of osteoclastic bone resorption. The protein is Parathyroid hormone-related protein (PTHLH) of Bos taurus (Bovine).